Consider the following 208-residue polypeptide: Putative RING finger protein 413R (208 aa).

The tract at residues 1–87 is disordered; sequence MDAIFYPLPI…RHWSDDDSDR (87 aa). A compositionally biased stretch (acidic residues) spans 22–71; that stretch reads DFQEEDFQEEDFQEEDFQEEDFQEEDEDEEDEEVNEYPSDLDDEYPDSDY. Positions 72-82 are enriched in basic and acidic residues; it reads YDERSDRHWSD. Positions 83 to 147 form a coiled coil; the sequence is DDSDRDLDDL…KLTTLSKNLT (65 aa). Residues 148-196 form an RING-type zinc finger; the sequence is CIICLTNQVQILTIPCGHLIMCNPCSLNLNNSVCTRGVNSNYEKCPKCR.

The protein is Putative RING finger protein 413R (EF2) of Acheta domesticus (House cricket).